We begin with the raw amino-acid sequence, 648 residues long: MTNFDSKKLNKHWTIEDSISTYGIDKWGDQYFSINSLGNISITPNRNSKKTIDLFKLVNEIKSREINTPLILRFNDILKDRITELNNAFSQAIETYNYKNIFQGVFPIKCNQQKNVLEKIIEYGDYWDFGLEVGSKSELLIGLSLLENKKSLLICNGYKDKKYIEIAILARKLGKQPIIVIEQIDEVQRIIEAVKNLRSTPILGIRSKLSSKSSGRWGKSVGDNSKFGLSIPEIMLTIKELKEASLINEMKLLHFHIGSQISDISVIKDALQEASQIFVELSKLGAPMKYIDVGGGLGIDFDGTKTSSNTSTNYSLQNYANDVVATIKDSCEVNNIQHPIIISESGRAIVSHCSVLIFDVLGTSHVSSQIKVSHQKKTSLIIKNLIDTHNQLKNLRNKKEDLSEIIELWNDAKKFKKDCLVAFRLGFISLGERAYAEELTWACAKEISSHLDNEKIIHPDLSEITETLSSTYYANLSVFKSIPDTWAINQIFPIIPIHRHLEEPICKGNFADLTCDSDGKLNNFIDNGKIKSLLNLHRPEENNDYLIGIFMAGAYQEALGNFHNLFGNTNVIHIDINEDNTYKIKNIIKENSKSEILELLDYSSDNLVESIRINTEFAINNKTLSIEEARKLIDQIETSLRKSSYLSE.

K109 carries the N6-(pyridoxal phosphate)lysine modification. 291-301 is a binding site for substrate; sequence IDVGGGLGIDF.

This sequence belongs to the Orn/Lys/Arg decarboxylase class-II family. SpeA subfamily. Mg(2+) is required as a cofactor. Pyridoxal 5'-phosphate serves as cofactor.

It carries out the reaction L-arginine + H(+) = agmatine + CO2. The protein operates within amine and polyamine biosynthesis; agmatine biosynthesis; agmatine from L-arginine: step 1/1. Functionally, catalyzes the biosynthesis of agmatine from arginine. This Prochlorococcus marinus (strain MIT 9515) protein is Biosynthetic arginine decarboxylase.